Reading from the N-terminus, the 216-residue chain is Deoxyribose-phosphate aldolase (216 aa).

Asp89 (proton donor/acceptor) is an active-site residue. Lys153 serves as the catalytic Schiff-base intermediate with acetaldehyde. Lys182 acts as the Proton donor/acceptor in catalysis.

Belongs to the DeoC/FbaB aldolase family. DeoC type 1 subfamily.

It is found in the cytoplasm. The catalysed reaction is 2-deoxy-D-ribose 5-phosphate = D-glyceraldehyde 3-phosphate + acetaldehyde. The protein operates within carbohydrate degradation; 2-deoxy-D-ribose 1-phosphate degradation; D-glyceraldehyde 3-phosphate and acetaldehyde from 2-deoxy-alpha-D-ribose 1-phosphate: step 2/2. In terms of biological role, catalyzes a reversible aldol reaction between acetaldehyde and D-glyceraldehyde 3-phosphate to generate 2-deoxy-D-ribose 5-phosphate. In Treponema denticola (strain ATCC 35405 / DSM 14222 / CIP 103919 / JCM 8153 / KCTC 15104), this protein is Deoxyribose-phosphate aldolase.